We begin with the raw amino-acid sequence, 466 residues long: Arginine biosynthesis bifunctional protein ArgJ, mitochondrial (466 aa).

Residues threonine 194, lysine 223, threonine 234, glutamate 321, asparagine 461, and threonine 466 each contribute to the substrate site. Threonine 234 acts as the Nucleophile in catalysis.

This sequence belongs to the ArgJ family. Heterodimer of an alpha and a beta chain. In terms of processing, the alpha and beta chains are autoproteolytically processed from a single precursor protein within the mitochondrion.

It is found in the mitochondrion matrix. The enzyme catalyses N(2)-acetyl-L-ornithine + L-glutamate = N-acetyl-L-glutamate + L-ornithine. The catalysed reaction is L-glutamate + acetyl-CoA = N-acetyl-L-glutamate + CoA + H(+). The protein operates within amino-acid biosynthesis; L-arginine biosynthesis; L-ornithine and N-acetyl-L-glutamate from L-glutamate and N(2)-acetyl-L-ornithine (cyclic): step 1/1. Its pathway is amino-acid biosynthesis; L-arginine biosynthesis; N(2)-acetyl-L-ornithine from L-glutamate: step 1/4. In terms of biological role, catalyzes two activities which are involved in the cyclic version of arginine biosynthesis: the synthesis of acetylglutamate from glutamate and acetyl-CoA, and of ornithine by transacetylation between acetylornithine and glutamate. The protein is Arginine biosynthesis bifunctional protein ArgJ, mitochondrial of Aspergillus flavus (strain ATCC 200026 / FGSC A1120 / IAM 13836 / NRRL 3357 / JCM 12722 / SRRC 167).